Consider the following 373-residue polypeptide: Putative 8-amino-7-oxononanoate synthase (373 aa).

Residue R18 participates in substrate binding. 93-94 (GF) lines the pyridoxal 5'-phosphate pocket. H118 lines the substrate pocket. Pyridoxal 5'-phosphate contacts are provided by residues S166, 191–194 (DEAH), and 220–223 (TLSK). K223 bears the N6-(pyridoxal phosphate)lysine mark. T337 contributes to the substrate binding site.

It belongs to the class-II pyridoxal-phosphate-dependent aminotransferase family. BioF subfamily. In terms of assembly, homodimer. Pyridoxal 5'-phosphate is required as a cofactor.

The enzyme catalyses 6-carboxyhexanoyl-[ACP] + L-alanine + H(+) = (8S)-8-amino-7-oxononanoate + holo-[ACP] + CO2. It functions in the pathway cofactor biosynthesis; biotin biosynthesis. In terms of biological role, catalyzes the decarboxylative condensation of pimeloyl-[acyl-carrier protein] and L-alanine to produce 8-amino-7-oxononanoate (AON), [acyl-carrier protein], and carbon dioxide. This Aquifex aeolicus (strain VF5) protein is Putative 8-amino-7-oxononanoate synthase (bioF).